A 202-amino-acid chain; its full sequence is Phospholipase A2 inhibitor gamma subunit A (202 aa).

The signal sequence occupies residues 1–19 (MKSLQIICLLFIFVARGSC). 8 disulfide bridges follow: C22-C47, C25-C32, C40-C68, C74-C95, C96-C101, C119-C144, C137-C166, and C170-C192.

This sequence belongs to the CNF-like-inhibitor family. As to quaternary structure, heteromer composed of subunit A and subunit B. Expressed by the liver.

The protein resides in the secreted. Inhibits the enzymatic activity of the phospholipase A2 (PLA2). This chain is Phospholipase A2 inhibitor gamma subunit A, found in Elaphe climacophora (Japanese rat snake).